Here is a 274-residue protein sequence, read N- to C-terminus: Proteasome subunit beta (274 aa).

Positions 1-52 (MADPMGGAGRLPAVFMTPGTSSFTDFLSQSAPHLLPGARGGLPGPVTEVAHG) are cleaved as a propeptide — removed in mature form; by autocatalysis. The Nucleophile role is filled by Thr-53.

This sequence belongs to the peptidase T1B family. As to quaternary structure, the 20S proteasome core is composed of 14 alpha and 14 beta subunits that assemble into four stacked heptameric rings, resulting in a barrel-shaped structure. The two inner rings, each composed of seven catalytic beta subunits, are sandwiched by two outer rings, each composed of seven alpha subunits. The catalytic chamber with the active sites is on the inside of the barrel. Has a gated structure, the ends of the cylinder being occluded by the N-termini of the alpha-subunits. Is capped by the proteasome-associated ATPase, ARC.

It is found in the cytoplasm. It catalyses the reaction Cleavage of peptide bonds with very broad specificity.. Its pathway is protein degradation; proteasomal Pup-dependent pathway. The formation of the proteasomal ATPase ARC-20S proteasome complex, likely via the docking of the C-termini of ARC into the intersubunit pockets in the alpha-rings, may trigger opening of the gate for substrate entry. Interconversion between the open-gate and close-gate conformations leads to a dynamic regulation of the 20S proteasome proteolysis activity. In terms of biological role, component of the proteasome core, a large protease complex with broad specificity involved in protein degradation. This Frankia alni (strain DSM 45986 / CECT 9034 / ACN14a) protein is Proteasome subunit beta.